The primary structure comprises 311 residues: Pyrimidine-specific ribonucleoside hydrolase RihA (311 aa).

H240 is a catalytic residue.

It belongs to the IUNH family. RihA subfamily.

Its function is as follows. Hydrolyzes cytidine or uridine to ribose and cytosine or uracil, respectively. This Salmonella newport (strain SL254) protein is Pyrimidine-specific ribonucleoside hydrolase RihA.